Here is a 533-residue protein sequence, read N- to C-terminus: Lanosterol 14-alpha demethylase (533 aa).

A heme-binding site is contributed by C472.

It belongs to the cytochrome P450 family. Heme is required as a cofactor.

The protein resides in the membrane. It catalyses the reaction a 14alpha-methyl steroid + 3 reduced [NADPH--hemoprotein reductase] + 3 O2 = a Delta(14) steroid + formate + 3 oxidized [NADPH--hemoprotein reductase] + 4 H2O + 4 H(+). The catalysed reaction is a 14alpha-methyl steroid + reduced [NADPH--hemoprotein reductase] + O2 = a 14alpha-hydroxymethyl steroid + oxidized [NADPH--hemoprotein reductase] + H2O + H(+). It carries out the reaction a 14alpha-hydroxymethyl steroid + reduced [NADPH--hemoprotein reductase] + O2 = a 14alpha-formyl steroid + oxidized [NADPH--hemoprotein reductase] + 2 H2O + H(+). The enzyme catalyses a 14alpha-formyl steroid + reduced [NADPH--hemoprotein reductase] + O2 = a Delta(14) steroid + formate + oxidized [NADPH--hemoprotein reductase] + H2O + 2 H(+). It catalyses the reaction lanosterol + 3 reduced [NADPH--hemoprotein reductase] + 3 O2 = 4,4-dimethyl-5alpha-cholesta-8,14,24-trien-3beta-ol + formate + 3 oxidized [NADPH--hemoprotein reductase] + 4 H2O + 4 H(+). The catalysed reaction is lanosterol + reduced [NADPH--hemoprotein reductase] + O2 = 32-hydroxylanosterol + oxidized [NADPH--hemoprotein reductase] + H2O + H(+). It carries out the reaction 32-hydroxylanosterol + reduced [NADPH--hemoprotein reductase] + O2 = 32-oxolanosterol + oxidized [NADPH--hemoprotein reductase] + 2 H2O + H(+). The enzyme catalyses 32-oxolanosterol + reduced [NADPH--hemoprotein reductase] + O2 = 4,4-dimethyl-5alpha-cholesta-8,14,24-trien-3beta-ol + formate + oxidized [NADPH--hemoprotein reductase] + H2O + 2 H(+). It catalyses the reaction eburicol + 3 reduced [NADPH--hemoprotein reductase] + 3 O2 = 14-demethyleburicol + formate + 3 oxidized [NADPH--hemoprotein reductase] + 4 H2O + 4 H(+). The catalysed reaction is eburicol + reduced [NADPH--hemoprotein reductase] + O2 = 32-hydroxyeburicol + oxidized [NADPH--hemoprotein reductase] + H2O + H(+). It carries out the reaction 32-hydroxyeburicol + reduced [NADPH--hemoprotein reductase] + O2 = 32-oxoeburicol + oxidized [NADPH--hemoprotein reductase] + 2 H2O + H(+). The enzyme catalyses 32-oxoeburicol + reduced [NADPH--hemoprotein reductase] + O2 = 14-demethyleburicol + formate + oxidized [NADPH--hemoprotein reductase] + H2O + 2 H(+). The protein operates within steroid biosynthesis; zymosterol biosynthesis; zymosterol from lanosterol: step 1/6. Functionally, sterol 14alpha-demethylase that plays a critical role in the third module of ergosterol biosynthesis pathway, being ergosterol the major sterol component in fungal membranes that participates in a variety of functions. The third module or late pathway involves the ergosterol synthesis itself through consecutive reactions that mainly occur in the endoplasmic reticulum (ER) membrane. In filamentous fungi, during the initial step of this module, lanosterol (lanosta-8,24-dien-3beta-ol) can be metabolized to eburicol. Sterol 14alpha-demethylase catalyzes the three-step oxidative removal of the 14alpha-methyl group (C-32) of both these sterols in the form of formate, and converts eburicol and lanosterol to 14-demethyleburicol (4,4,24-trimethylergosta-8,14,24(28)-trienol) and 4,4-dimethyl-5alpha-cholesta-8,14,24-trien-3beta-ol, respectively, which are further metabolized by other enzymes in the pathway to ergosterol. Can also use substrates not intrinsic to fungi, such as 24,25-dihydrolanosterol (DHL), producing 4,4-dimethyl-8,14-cholestadien-3-beta-ol, but at lower rates than the endogenous substrates. The protein is Lanosterol 14-alpha demethylase (ERG11) of Candida glabrata (strain ATCC 2001 / BCRC 20586 / JCM 3761 / NBRC 0622 / NRRL Y-65 / CBS 138) (Yeast).